Here is a 150-residue protein sequence, read N- to C-terminus: SsrA-binding protein (150 aa).

The protein belongs to the SmpB family.

Its subcellular location is the cytoplasm. Required for rescue of stalled ribosomes mediated by trans-translation. Binds to transfer-messenger RNA (tmRNA), required for stable association of tmRNA with ribosomes. tmRNA and SmpB together mimic tRNA shape, replacing the anticodon stem-loop with SmpB. tmRNA is encoded by the ssrA gene; the 2 termini fold to resemble tRNA(Ala) and it encodes a 'tag peptide', a short internal open reading frame. During trans-translation Ala-aminoacylated tmRNA acts like a tRNA, entering the A-site of stalled ribosomes, displacing the stalled mRNA. The ribosome then switches to translate the ORF on the tmRNA; the nascent peptide is terminated with the 'tag peptide' encoded by the tmRNA and targeted for degradation. The ribosome is freed to recommence translation, which seems to be the essential function of trans-translation. This Borreliella burgdorferi (strain ATCC 35210 / DSM 4680 / CIP 102532 / B31) (Borrelia burgdorferi) protein is SsrA-binding protein.